A 188-amino-acid polypeptide reads, in one-letter code: Diphosphoinositol polyphosphate phosphohydrolase DDP1 (188 aa).

Residues 1–21 (MGKTADNHGPVRSETAREGRE) are compositionally biased toward basic and acidic residues. Residues 1 to 23 (MGKTADNHGPVRSETAREGRENQ) form a disordered region. In terms of domain architecture, Nudix hydrolase spans 30–179 (GARLVAGCIC…KRPELLEALN (150 aa)). Arg-32, Ser-52, Ser-53, and Lys-63 together coordinate 1D-myo-inositol hexakisphosphate. The 5-diphospho-1D-myo-inositol 1,2,3,4,6-pentakisphosphate site is built by Arg-32, Ser-52, Ser-53, and Lys-63. Residues Arg-32, Ser-52, Ser-53, and Lys-63 each coordinate P(1),P(5)-bis(5'-adenosyl) pentaphosphate. Positions 63, 80, and 84 each coordinate Mg(2+). The Nudix box motif lies at 65–86 (GVEKDEPNYETTAQRETWEEAG). Asp-100 contacts P(1),P(5)-bis(5'-adenosyl) pentaphosphate. Residues Arg-102, Arg-129, Arg-152, and Arg-171 each coordinate 1D-myo-inositol hexakisphosphate. Arg-102 provides a ligand contact to 5-diphospho-1D-myo-inositol 1,2,3,4,6-pentakisphosphate. 5-diphospho-1D-myo-inositol 1,2,3,4,6-pentakisphosphate-binding residues include Arg-152 and Arg-171. Residues Arg-152, Arg-171, and Glu-173 each coordinate P(1),P(5)-bis(5'-adenosyl) pentaphosphate.

It belongs to the Nudix hydrolase family. DIPP subfamily. Requires Mg(2+) as cofactor. It depends on Mn(2+) as a cofactor. Zn(2+) serves as cofactor.

It is found in the cytoplasm. The protein localises to the nucleus. The catalysed reaction is diphospho-myo-inositol polyphosphate + H2O = myo-inositol polyphosphate + phosphate.. It catalyses the reaction P(1),P(6)-bis(5'-adenosyl) hexaphosphate + H2O = adenosine 5'-pentaphosphate + AMP + 2 H(+). The enzyme catalyses P(1),P(5)-bis(5'-adenosyl) pentaphosphate + H2O = adenosine 5'-tetraphosphate + AMP + 2 H(+). It carries out the reaction [phosphate](n+1) + n H2O = (n+1) phosphate + n H(+). In terms of biological role, may eliminate potentially toxic dinucleoside polyphosphates during sporulation. Most active against diadenosine 5',5'''-P1,P6-hexaphosphate (Ap6A). Can also hydrolyze diadenosine 5',5'''-P1,P5-pentaphosphate (Ap5A), adenosine 5'-pentaphosphate (p5A), and adenosine 5'-tetraphosphate (p4A) are also substrates, but not diadenosine 5',5'''-P1,P4-tetraphosphate (Ap4A) or other dinucleotides, mononucleotides, nucleotide sugars, or nucleotide alcohols. Also cleaves a beta-phosphate from the diphosphate groups in PP-InsP5 (diphosphoinositol pentakisphosphate) and [PP]2-InsP4 (bisdiphosphoinositol tetrakisphosphate). Also has endopolyphosphatase activity. The chain is Diphosphoinositol polyphosphate phosphohydrolase DDP1 (DDP1) from Saccharomyces cerevisiae (strain ATCC 204508 / S288c) (Baker's yeast).